The sequence spans 129 residues: Lysozyme C (129 aa).

A C-type lysozyme domain is found at 1 to 129 (KVYGRCELAA…VNAWTRGCRL (129 aa)). 4 disulfide bridges follow: Cys-6/Cys-127, Cys-30/Cys-115, Cys-64/Cys-80, and Cys-76/Cys-94. Catalysis depends on residues Glu-35 and Asp-52.

This sequence belongs to the glycosyl hydrolase 22 family. In terms of assembly, monomer.

The protein localises to the secreted. It carries out the reaction Hydrolysis of (1-&gt;4)-beta-linkages between N-acetylmuramic acid and N-acetyl-D-glucosamine residues in a peptidoglycan and between N-acetyl-D-glucosamine residues in chitodextrins.. In terms of biological role, lysozymes have primarily a bacteriolytic function; those in tissues and body fluids are associated with the monocyte-macrophage system and enhance the activity of immunoagents. The protein is Lysozyme C (LYZ) of Chrysolophus amherstiae (Lady Amherst's pheasant).